Reading from the N-terminus, the 85-residue chain is U4-theraphotoxin-Hhn1a (85 aa).

The N-terminal stretch at 1–22 (MKVTLIAILTCAAVLVLHTTAA) is a signal peptide. A propeptide spanning residues 23 to 48 (EELEAESQLMEVGMPDTELAAVDEER) is cleaved from the precursor. Cystine bridges form between cysteine 52–cysteine 66, cysteine 56–cysteine 77, and cysteine 71–cysteine 82.

It belongs to the neurotoxin 12 (Hwtx-2) family. 02 (Hwtx-2) subfamily. As to quaternary structure, monomer. As to expression, expressed by the venom gland.

It is found in the secreted. In terms of biological role, neurotoxin active on both insects and mammals. The polypeptide is U4-theraphotoxin-Hhn1a (Cyriopagopus hainanus (Chinese bird spider)).